A 490-amino-acid polypeptide reads, in one-letter code: Metal cation symporter ZIP14 (490 aa).

Positions 1 to 28 are cleaved as a signal peptide; that stretch reads MELLRPALPSYFLLTLLSIWTAASEARA. Residues 29–155 are Extracellular-facing; the sequence is VSTGMPTISA…PSSVEVWGYG (127 aa). N-linked (GlcNAc...) asparagine glycosylation is found at asparagine 75, asparagine 85, and asparagine 100. The tract at residues 127 to 146 is disordered; sequence ACSSENQENEENEQTEEGRP. The chain crosses the membrane as a helical span at residues 156-176; it reads LLCVTVISLCSLLGASVVPFM. Residues 177 to 184 are Cytoplasmic-facing; that stretch reads KKTFYKRL. A helical transmembrane segment spans residues 185–205; sequence LLYFIALAIGTLYSNALFQLI. The Extracellular portion of the chain corresponds to 206 to 222; the sequence is PEAFGFNPMEDYYVSKS. The chain crosses the membrane as a helical span at residues 223 to 243; that stretch reads AVVFGGFYLFFFTEKILKMLL. The Cytoplasmic portion of the chain corresponds to 244–395; it reads KQKNEHHHGH…LLNAGMSLQQ (152 aa). The short motif at 249–256 is the HHHGHXHX-motif element; it reads HHHGHSHY. The short motif at 374-379 is the XEXPHE-motif element; that stretch reads EEFPHE. A helical transmembrane segment spans residues 396–416; it reads ALFFNFLSACCCYVGLGFGIL. Over 417–422 the chain is Extracellular; that stretch reads AGSHFS. Residues 423–443 form a helical membrane-spanning segment; it reads ANWIFALAGGMFLYISLADMF. Residues 444–459 lie on the Cytoplasmic side of the membrane; the sequence is PEMNEVSQEDERKGSA. The helical transmembrane segment at 460 to 480 threads the bilayer; sequence LIPFVIQNLGLLTGFGIMLVL. Residues 481-490 are Extracellular-facing; that stretch reads TMYSGHIQIG.

This sequence belongs to the ZIP transporter (TC 2.A.5) family. Homotrimer. Ubiquitinated. Ubiquitination occurs upon iron depletion. The ubiquitinated form undergoes proteasomal degradation. Post-translationally, N-glycosylated. N-glycosylation at Asn-100 is required for iron-regulated extraction of the transporter from membranes and subsequent proteasomal degradation.

It localises to the cell membrane. The protein resides in the apical cell membrane. It is found in the basolateral cell membrane. Its subcellular location is the early endosome membrane. The protein localises to the late endosome membrane. It localises to the lysosome membrane. It catalyses the reaction Zn(2+)(out) + 2 hydrogencarbonate(out) = Zn(2+)(in) + 2 hydrogencarbonate(in). It carries out the reaction Mn(2+)(out) + 2 hydrogencarbonate(out) = Mn(2+)(in) + 2 hydrogencarbonate(in). The enzyme catalyses Fe(2+)(out) + 2 hydrogencarbonate(out) = Fe(2+)(in) + 2 hydrogencarbonate(in). The catalysed reaction is Cd(2+)(out) + 2 hydrogencarbonate(out) = Cd(2+)(in) + 2 hydrogencarbonate(in). Functionally, electroneutral transporter of the plasma membrane mediating the cellular uptake of the divalent metal cations zinc, manganese and iron that are important for tissue homeostasis, metabolism, development and immunity. Functions as an energy-dependent symporter, transporting through the membranes an electroneutral complex composed of a divalent metal cation and two bicarbonate anions. Beside these endogenous cellular substrates, can also import cadmium a non-essential metal which is cytotoxic and carcinogenic. This is Metal cation symporter ZIP14 from Bos taurus (Bovine).